We begin with the raw amino-acid sequence, 905 residues long: Alanine--tRNA ligase (905 aa).

4 residues coordinate Zn(2+): H569, H573, C693, and H697.

This sequence belongs to the class-II aminoacyl-tRNA synthetase family. The cofactor is Zn(2+).

It is found in the cytoplasm. The enzyme catalyses tRNA(Ala) + L-alanine + ATP = L-alanyl-tRNA(Ala) + AMP + diphosphate. Its function is as follows. Catalyzes the attachment of alanine to tRNA(Ala) in a two-step reaction: alanine is first activated by ATP to form Ala-AMP and then transferred to the acceptor end of tRNA(Ala). Also edits incorrectly charged Ser-tRNA(Ala) and Gly-tRNA(Ala) via its editing domain. In Roseiflexus castenholzii (strain DSM 13941 / HLO8), this protein is Alanine--tRNA ligase.